We begin with the raw amino-acid sequence, 185 residues long: Protein GrpE (185 aa).

The segment covering 1–20 has biased composition (basic and acidic residues); it reads MSQEKKEELQSEAQVTKEET. A disordered region spans residues 1–28; it reads MSQEKKEELQSEAQVTKEETPQANEAAA.

It belongs to the GrpE family. As to quaternary structure, homodimer.

Its subcellular location is the cytoplasm. Its function is as follows. Participates actively in the response to hyperosmotic and heat shock by preventing the aggregation of stress-denatured proteins, in association with DnaK and GrpE. It is the nucleotide exchange factor for DnaK and may function as a thermosensor. Unfolded proteins bind initially to DnaJ; upon interaction with the DnaJ-bound protein, DnaK hydrolyzes its bound ATP, resulting in the formation of a stable complex. GrpE releases ADP from DnaK; ATP binding to DnaK triggers the release of the substrate protein, thus completing the reaction cycle. Several rounds of ATP-dependent interactions between DnaJ, DnaK and GrpE are required for fully efficient folding. The polypeptide is Protein GrpE (Sulfurimonas denitrificans (strain ATCC 33889 / DSM 1251) (Thiomicrospira denitrificans (strain ATCC 33889 / DSM 1251))).